We begin with the raw amino-acid sequence, 159 residues long: SsrA-binding protein (159 aa).

The tract at residues 133–159 (KKLHDKRETSKERDWNRQKNRLLKERG) is disordered. The span at 137–159 (DKRETSKERDWNRQKNRLLKERG) shows a compositional bias: basic and acidic residues.

This sequence belongs to the SmpB family.

The protein localises to the cytoplasm. Its function is as follows. Required for rescue of stalled ribosomes mediated by trans-translation. Binds to transfer-messenger RNA (tmRNA), required for stable association of tmRNA with ribosomes. tmRNA and SmpB together mimic tRNA shape, replacing the anticodon stem-loop with SmpB. tmRNA is encoded by the ssrA gene; the 2 termini fold to resemble tRNA(Ala) and it encodes a 'tag peptide', a short internal open reading frame. During trans-translation Ala-aminoacylated tmRNA acts like a tRNA, entering the A-site of stalled ribosomes, displacing the stalled mRNA. The ribosome then switches to translate the ORF on the tmRNA; the nascent peptide is terminated with the 'tag peptide' encoded by the tmRNA and targeted for degradation. The ribosome is freed to recommence translation, which seems to be the essential function of trans-translation. The sequence is that of SsrA-binding protein from Sinorhizobium medicae (strain WSM419) (Ensifer medicae).